The following is a 590-amino-acid chain: Leucine-rich repeat transmembrane neuronal protein 4 (590 aa).

The signal sequence occupies residues 1-30 (MGFRLITQLKGMSVFLVLFPTLLLVMLTGA). The LRRNT domain maps to 31 to 61 (QRACPKNCRCDGKIVYCESHAFADIPENISG). Residues 31 to 424 (QRACPKNCRC…HEYEHVSFHK (394 aa)) are Extracellular-facing. Asn58 is a glycosylation site (N-linked (GlcNAc...) asparagine). LRR repeat units follow at residues 62 to 83 (GSQG…QFAG), 86 to 107 (QLIW…AFQG), 110 to 131 (RLKE…TFHP), 134 to 155 (NLRN…QFKG), 158 to 179 (KLII…VFQD), 182 to 203 (NLDF…AFAG), 206 to 226 (KLKE…AHFP), 230 to 251 (NLRS…LTWT), 254 to 275 (SLHT…TFKC), and 278 to 299 (NLQK…TVNA). A glycan (N-linked (GlcNAc...) asparagine) is linked at Asn126. A glycan (N-linked (GlcNAc...) asparagine) is linked at Asn291. Residues 311–362 (NMWECSRSICPLFYWLKNFKGNKESTMICAGPKHIQGEKVSDAVETYNICSD) form the LRRCT domain. A helical membrane pass occupies residues 425 to 445 (IIAGSVALFLSVAMILLVIYV). Topologically, residues 446 to 590 (SWKRYPASMK…PAIYLERITN (145 aa)) are cytoplasmic.

It belongs to the LRRTM family. Peripherally associated with AMPAR complex. AMPAR complex consists of an inner core made of 4 pore-forming GluA/GRIA proteins (GRIA1, GRIA2, GRIA3 and GRIA4) and 4 major auxiliary subunits arranged in a twofold symmetry. One of the two pairs of distinct binding sites is occupied either by CNIH2, CNIH3 or CACNG2, CACNG3. The other harbors CACNG2, CACNG3, CACNG4, CACNG8 or GSG1L. This inner core of AMPAR complex is complemented by outer core constituents binding directly to the GluA/GRIA proteins at sites distinct from the interaction sites of the inner core constituents. Outer core constituents include at least PRRT1, PRRT2, CKAMP44/SHISA9, FRRS1L and NRN1. The proteins of the inner and outer core serve as a platform for other, more peripherally associated AMPAR constituents, including LRRTM4. Alone or in combination, these auxiliary subunits control the gating and pharmacology of the AMPAR complex and profoundly impact their biogenesis and protein processing. As to expression, predominantly in the brain (at protein level). Also expressed in the cerebellum and other tissues.

The protein localises to the cell membrane. It localises to the postsynaptic cell membrane. Its function is as follows. May play a role in the development and maintenance of the vertebrate nervous system. Exhibits strong synaptogenic activity, restricted to excitatory presynaptic differentiation. The protein is Leucine-rich repeat transmembrane neuronal protein 4 (Lrrtm4) of Mus musculus (Mouse).